Here is a 149-residue protein sequence, read N- to C-terminus: Large ribosomal subunit protein bL9 (149 aa).

Belongs to the bacterial ribosomal protein bL9 family.

Its function is as follows. Binds to the 23S rRNA. This is Large ribosomal subunit protein bL9 from Xylella fastidiosa (strain 9a5c).